The following is a 353-amino-acid chain: Photosystem II D2 protein (353 aa).

Threonine 2 is subject to N-acetylthreonine. Residue threonine 2 is modified to Phosphothreonine. The helical transmembrane segment at 41-61 (CAYFAVGGWFTGTTFVTSWYT) threads the bilayer. Histidine 118 contacts chlorophyll a. A helical membrane pass occupies residues 125–141 (GFMLRQFELARSVQLRP). The pheophytin a site is built by glutamine 130 and asparagine 143. A helical membrane pass occupies residues 153–166 (VFVSVFLIYPLGQS). Residue histidine 198 participates in chlorophyll a binding. Residues 208–228 (AALLCAIHGATVENTLFEDGD) form a helical membrane-spanning segment. Positions 215 and 262 each coordinate a plastoquinone. Residue histidine 215 participates in Fe cation binding. A Fe cation-binding site is contributed by histidine 269. Residues 279–295 (GLWMSALGVVGLALNLR) traverse the membrane as a helical segment.

It belongs to the reaction center PufL/M/PsbA/D family. PSII is composed of 1 copy each of membrane proteins PsbA, PsbB, PsbC, PsbD, PsbE, PsbF, PsbH, PsbI, PsbJ, PsbK, PsbL, PsbM, PsbT, PsbX, PsbY, PsbZ, Psb30/Ycf12, at least 3 peripheral proteins of the oxygen-evolving complex and a large number of cofactors. It forms dimeric complexes. The cofactor is The D1/D2 heterodimer binds P680, chlorophylls that are the primary electron donor of PSII, and subsequent electron acceptors. It shares a non-heme iron and each subunit binds pheophytin, quinone, additional chlorophylls, carotenoids and lipids. There is also a Cl(-1) ion associated with D1 and D2, which is required for oxygen evolution. The PSII complex binds additional chlorophylls, carotenoids and specific lipids..

It localises to the plastid. The protein localises to the chloroplast thylakoid membrane. It catalyses the reaction 2 a plastoquinone + 4 hnu + 2 H2O = 2 a plastoquinol + O2. In terms of biological role, photosystem II (PSII) is a light-driven water:plastoquinone oxidoreductase that uses light energy to abstract electrons from H(2)O, generating O(2) and a proton gradient subsequently used for ATP formation. It consists of a core antenna complex that captures photons, and an electron transfer chain that converts photonic excitation into a charge separation. The D1/D2 (PsbA/PsbD) reaction center heterodimer binds P680, the primary electron donor of PSII as well as several subsequent electron acceptors. D2 is needed for assembly of a stable PSII complex. The protein is Photosystem II D2 protein of Guizotia abyssinica (Niger).